The primary structure comprises 481 residues: Bestrophin homolog 17 (481 aa).

Over 1 to 27 the chain is Cytoplasmic; that stretch reads MTVSYQLDVSSGNPLLFLRLLGRWRGS. Residues 28 to 48 form a helical membrane-spanning segment; it reads IWKSVVGDLFVWLLFYYAIYF. Residues 49–95 lie on the Extracellular side of the membrane; that stretch reads AYRYAFSKQLQTVFEEISIHTDDRMKYLPLTFMLGFFVTTVFERWRS. Residues 96-116 traverse the membrane as a helical segment; the sequence is ALNVMPFIESVALSVAVLLPG. The Cytoplasmic segment spans residues 117–230; that stretch reads KGREDRLTRR…AMETLIKFDA (114 aa). The helical transmembrane segment at 231-251 threads the bilayer; it reads IPIPIAYPQVVFLAVRVYFAI. At 252 to 274 the chain is on the extracellular side; it reads CLVSRQFLISDMKSKTQMDWPVP. Residues 275–295 form a helical membrane-spanning segment; the sequence is IMTVLEFIFVIGWMKVAEVLL. The Cytoplasmic portion of the chain corresponds to 296–481; that stretch reads NPLGEDDDDF…SSEESVDKKG (186 aa). Residues 427-481 are disordered; sequence AGMLNKSTQPDRPTMETVSEEHEPSHFYRGDRVHSSDSGLSKTQQSSEESVDKKG. Basic and acidic residues predominate over residues 445 to 461; that stretch reads SEEHEPSHFYRGDRVHS. A compositionally biased stretch (polar residues) spans 462–474; that stretch reads SDSGLSKTQQSSE.

It belongs to the anion channel-forming bestrophin (TC 1.A.46) family. Calcium-sensitive chloride channel subfamily. In terms of assembly, forms oligomers.

It is found in the cell membrane. In terms of biological role, forms chloride channels. The polypeptide is Bestrophin homolog 17 (Caenorhabditis elegans).